The sequence spans 466 residues: 23S rRNA (uracil(1939)-C(5))-methyltransferase RlmD (466 aa).

The interval 1–22 (MSSQPNPTSHPEAASAASAASN) is disordered. One can recognise a TRAM domain in the interval 17–81 (ASAASNDPVV…PSYEQAHLVE (65 aa)). [4Fe-4S] cluster-binding residues include Cys94, Cys100, Cys103, and Cys182. Residues Gln290, Phe319, Asn324, Glu340, Asn368, and Asp389 each coordinate S-adenosyl-L-methionine. Cys422 acts as the Nucleophile in catalysis.

Belongs to the class I-like SAM-binding methyltransferase superfamily. RNA M5U methyltransferase family. RlmD subfamily.

It catalyses the reaction uridine(1939) in 23S rRNA + S-adenosyl-L-methionine = 5-methyluridine(1939) in 23S rRNA + S-adenosyl-L-homocysteine + H(+). Functionally, catalyzes the formation of 5-methyl-uridine at position 1939 (m5U1939) in 23S rRNA. This chain is 23S rRNA (uracil(1939)-C(5))-methyltransferase RlmD, found in Cupriavidus metallidurans (strain ATCC 43123 / DSM 2839 / NBRC 102507 / CH34) (Ralstonia metallidurans).